The chain runs to 362 residues: Alpha-glucoside transport ATP-binding protein AglK (362 aa).

An ABC transporter domain is found at 4–235 (LLLKDIRKSY…PANLFVARFI (232 aa)). 36 to 43 (GPSGCGKS) provides a ligand contact to ATP.

The protein belongs to the ABC transporter superfamily.

It is found in the cell inner membrane. In terms of biological role, part of the binding-protein-dependent transport system for alpha-glucosides such as sucrose, maltose and trehalose. Probably responsible for energy coupling to the transport system. The polypeptide is Alpha-glucoside transport ATP-binding protein AglK (aglK) (Rhizobium meliloti (strain 1021) (Ensifer meliloti)).